A 357-amino-acid chain; its full sequence is tRNA-specific 2-thiouridylase MnmA (357 aa).

ATP contacts are provided by residues 6–13 and leucine 32; that span reads AMSGGVDS. Cysteine 101 serves as the catalytic Nucleophile. Cysteines 101 and 193 form a disulfide. Residue glycine 125 coordinates ATP. Positions 143–145 are interaction with tRNA; that stretch reads KDQ. The active-site Cysteine persulfide intermediate is cysteine 193.

The protein belongs to the MnmA/TRMU family.

It localises to the cytoplasm. The catalysed reaction is S-sulfanyl-L-cysteinyl-[protein] + uridine(34) in tRNA + AH2 + ATP = 2-thiouridine(34) in tRNA + L-cysteinyl-[protein] + A + AMP + diphosphate + H(+). Functionally, catalyzes the 2-thiolation of uridine at the wobble position (U34) of tRNA, leading to the formation of s(2)U34. The chain is tRNA-specific 2-thiouridylase MnmA from Mycolicibacterium gilvum (strain PYR-GCK) (Mycobacterium gilvum (strain PYR-GCK)).